We begin with the raw amino-acid sequence, 279 residues long: Proteasome subunit alpha type-1 (279 aa).

Tyr103 carries the post-translational modification Phosphotyrosine. Positions 235–249 (HVAIAKENDNDTPRN) are enriched in basic and acidic residues. The disordered stretch occupies residues 235-279 (HVAIAKENDNDTPRNDDDDDRPSPPEEPAAGPRDPEVLVATEQRP).

Belongs to the peptidase T1A family. As to quaternary structure, the 26S proteasome consists of a 20S proteasome core and two 19S regulatory subunits. The 20S proteasome core is composed of 28 subunits that are arranged in four stacked rings, resulting in a barrel-shaped structure. The two end rings are each formed by seven alpha subunits, and the two central rings are each formed by seven beta subunits. The catalytic chamber with the active sites is on the inside of the barrel. Interacts with PI31.

The protein resides in the cytoplasm. The protein localises to the nucleus. In terms of biological role, the proteasome is a multicatalytic proteinase complex which is characterized by its ability to cleave peptides with Arg, Phe, Tyr, Leu, and Glu adjacent to the leaving group at neutral or slightly basic pH. The proteasome has an ATP-dependent proteolytic activity. The sequence is that of Proteasome subunit alpha type-1 (Prosalpha6) from Drosophila melanogaster (Fruit fly).